A 302-amino-acid polypeptide reads, in one-letter code: Taste receptor type 2 member 104 (302 aa).

The Extracellular segment spans residues 1-7 (MLSALES). The helical transmembrane segment at 8–28 (ILLSVATSEAMLGVLGNTFIV) threads the bilayer. Topologically, residues 29 to 43 (LVNYTDWVRNKKLSK) are cytoplasmic. The chain crosses the membrane as a helical span at residues 44 to 64 (INFILTGLAISRIFTIWIITL). The Extracellular segment spans residues 65 to 87 (DAYTKVFLLTMLMPSSLHECMSY). Residues 88-108 (IWVIINHLSVWFSTSLGIFYF) form a helical membrane-spanning segment. The Cytoplasmic segment spans residues 109–128 (LKIANFSHYIFLWMKRRADK). A helical membrane pass occupies residues 129-149 (VFVFLIVFLIITWLASFPLAV). Topologically, residues 150–182 (KVIKDVKIYQSNTSWLIHLEKSELLINYVFANM) are extracellular. N-linked (GlcNAc...) asparagine glycosylation is present at N161. The chain crosses the membrane as a helical span at residues 183–203 (GPISLFIVAIIACFLLTISLW). Over 204–229 (RHSRQMQSIGSGFRDLNTEAHMKAMK) the chain is Cytoplasmic. The helical transmembrane segment at 230 to 250 (VLIAFIILFILYFLGILIETL) threads the bilayer. The Extracellular portion of the chain corresponds to 251-259 (CLFLTNNKL). A helical membrane pass occupies residues 260–280 (LFIFGFTLSAMYPCCHSFILI). The Cytoplasmic segment spans residues 281–302 (LTSRELKQATMRALQRLKCCET).

The protein belongs to the G-protein coupled receptor T2R family.

The protein resides in the membrane. Functionally, putative taste receptor which may play a role in the perception of bitterness. In Mus musculus (Mouse), this protein is Taste receptor type 2 member 104.